Reading from the N-terminus, the 75-residue chain is Protein RegB (75 aa).

Its function is as follows. Required for optimal exotoxin A production. In Pseudomonas aeruginosa (strain ATCC 15692 / DSM 22644 / CIP 104116 / JCM 14847 / LMG 12228 / 1C / PRS 101 / PAO1), this protein is Protein RegB (regB).